We begin with the raw amino-acid sequence, 236 residues long: V-set and transmembrane domain-containing protein 2A (236 aa).

An N-terminal signal peptide occupies residues 1–24; that stretch reads MMGIFLVYVGFVFFSVLYVQQGLS. One can recognise an Ig-like V-type domain in the interval 27–143; that stretch reads AKFTEFPRNV…YGELQEHKAQ (117 aa). N-linked (GlcNAc...) asparagine glycosylation occurs at Asn35. Cys48 and Cys127 are disulfide-bonded. An N-linked (GlcNAc...) asparagine glycan is attached at Asn175. Residues 184-199 show a composition bias toward polar residues; the sequence is IHGSANQRTHSTSSPQ. Positions 184–206 are disordered; it reads IHGSANQRTHSTSSPQVVAKIPK.

Homodimer. N-glycosylated. N-linked glycosylation is critical for secretion but not for preadipocyte cell differentiation activity.

The protein resides in the secreted. In terms of biological role, plays a role in the regulation of the early stage of white and brown preadipocyte cell differentiation. Promotes adipogenic commitment of preadipocytes by increasing gene expression of the transcription factor PPARG in a BMP4-dependent signaling pathway. The sequence is that of V-set and transmembrane domain-containing protein 2A from Homo sapiens (Human).